Consider the following 156-residue polypeptide: Small ribosomal subunit protein uS7 (156 aa).

It belongs to the universal ribosomal protein uS7 family. In terms of assembly, part of the 30S ribosomal subunit. Contacts proteins S9 and S11.

In terms of biological role, one of the primary rRNA binding proteins, it binds directly to 16S rRNA where it nucleates assembly of the head domain of the 30S subunit. Is located at the subunit interface close to the decoding center, probably blocks exit of the E-site tRNA. This chain is Small ribosomal subunit protein uS7, found in Dinoroseobacter shibae (strain DSM 16493 / NCIMB 14021 / DFL 12).